The following is a 441-amino-acid chain: ATP-dependent RNA helicase sub2 (441 aa).

The segment covering 23–32 has biased composition (low complexity); it reads TTAAPAANGD. A disordered region spans residues 23 to 42; sequence TTAAPAANGDAAKKGDLTVS. Residues 58–86 carry the Q motif motif; that stretch reads TGFRDFLLKGELLRAITDCGFEHPSEVQQ. A Helicase ATP-binding domain is found at 89–264; it reads IPTAILNVDV…KKFMRNPLEV (176 aa). 102–109 serves as a coordination point for ATP; the sequence is AKSGLGKT. The DECD box signature appears at 211 to 214; that stretch reads DECD. The 146-residue stretch at 292–437 folds into the Helicase C-terminal domain; it reads KLNELLDSLE…EYPEGGVDSS (146 aa).

This sequence belongs to the DEAD box helicase family. DECD subfamily.

The protein localises to the nucleus. The enzyme catalyses ATP + H2O = ADP + phosphate + H(+). Functionally, ATP-binding RNA helicase involved in transcription elongation and required for the export of mRNA out of the nucleus. SUB2 also plays a role in pre-mRNA splicing and spliceosome assembly. May be involved in rDNA and telomeric silencing, and maintenance of genome integrity. The sequence is that of ATP-dependent RNA helicase sub2 (sub2) from Aspergillus oryzae (strain ATCC 42149 / RIB 40) (Yellow koji mold).